A 206-amino-acid polypeptide reads, in one-letter code: 3-isopropylmalate dehydratase small subunit (206 aa).

It belongs to the LeuD family. LeuD type 1 subfamily. Heterodimer of LeuC and LeuD.

The enzyme catalyses (2R,3S)-3-isopropylmalate = (2S)-2-isopropylmalate. The protein operates within amino-acid biosynthesis; L-leucine biosynthesis; L-leucine from 3-methyl-2-oxobutanoate: step 2/4. In terms of biological role, catalyzes the isomerization between 2-isopropylmalate and 3-isopropylmalate, via the formation of 2-isopropylmaleate. This Leptospira borgpetersenii serovar Hardjo-bovis (strain JB197) protein is 3-isopropylmalate dehydratase small subunit.